A 208-amino-acid polypeptide reads, in one-letter code: 3-demethoxyubiquinol 3-hydroxylase (208 aa).

Fe cation contacts are provided by E57, E87, H90, E139, E171, and H174.

It belongs to the COQ7 family. Fe cation is required as a cofactor.

The protein resides in the cell membrane. The enzyme catalyses a 5-methoxy-2-methyl-3-(all-trans-polyprenyl)benzene-1,4-diol + AH2 + O2 = a 3-demethylubiquinol + A + H2O. Its pathway is cofactor biosynthesis; ubiquinone biosynthesis. Its function is as follows. Catalyzes the hydroxylation of 2-nonaprenyl-3-methyl-6-methoxy-1,4-benzoquinol during ubiquinone biosynthesis. The chain is 3-demethoxyubiquinol 3-hydroxylase from Burkholderia multivorans (strain ATCC 17616 / 249).